We begin with the raw amino-acid sequence, 244 residues long: rRNA adenine N-6-methyltransferase (244 aa).

6 residues coordinate S-adenosyl-L-methionine: asparagine 11, isoleucine 13, glycine 38, glutamate 59, aspartate 84, and asparagine 101.

Belongs to the class I-like SAM-binding methyltransferase superfamily. rRNA adenine N(6)-methyltransferase family.

It catalyses the reaction adenosine(2085) in 23S rRNA + 2 S-adenosyl-L-methionine = N(6)-dimethyladenosine(2085) in 23S rRNA + 2 S-adenosyl-L-homocysteine + 2 H(+). Its function is as follows. This protein produces a dimethylation of the adenine residue at position 2085 in 23S rRNA, resulting in reduced affinity between ribosomes and macrolide-lincosamide-streptogramin B antibiotics. Is involved in erythromycin resistance. This chain is rRNA adenine N-6-methyltransferase (ermGT), found in Limosilactobacillus reuteri (Lactobacillus reuteri).